The following is a 159-amino-acid chain: 2-C-methyl-D-erythritol 2,4-cyclodiphosphate synthase (159 aa).

The a divalent metal cation site is built by D8 and H10. Residues 8–10 and 34–35 contribute to the 4-CDP-2-C-methyl-D-erythritol 2-phosphate site; these read DVH and HS. A divalent metal cation is bound at residue H42. 4-CDP-2-C-methyl-D-erythritol 2-phosphate contacts are provided by residues 56–58, 61–65, 100–106, 132–135, F139, and R142; these read DIG, FPDTD, AQAPKML, and TTTE.

Belongs to the IspF family. Homotrimer. A divalent metal cation serves as cofactor.

The catalysed reaction is 4-CDP-2-C-methyl-D-erythritol 2-phosphate = 2-C-methyl-D-erythritol 2,4-cyclic diphosphate + CMP. It functions in the pathway isoprenoid biosynthesis; isopentenyl diphosphate biosynthesis via DXP pathway; isopentenyl diphosphate from 1-deoxy-D-xylulose 5-phosphate: step 4/6. Its function is as follows. Involved in the biosynthesis of isopentenyl diphosphate (IPP) and dimethylallyl diphosphate (DMAPP), two major building blocks of isoprenoid compounds. Catalyzes the conversion of 4-diphosphocytidyl-2-C-methyl-D-erythritol 2-phosphate (CDP-ME2P) to 2-C-methyl-D-erythritol 2,4-cyclodiphosphate (ME-CPP) with a corresponding release of cytidine 5-monophosphate (CMP). The polypeptide is 2-C-methyl-D-erythritol 2,4-cyclodiphosphate synthase (Klebsiella pneumoniae subsp. pneumoniae (strain ATCC 700721 / MGH 78578)).